Reading from the N-terminus, the 233-residue chain is Uracil-DNA glycosylase (233 aa).

Asp70 acts as the Proton acceptor in catalysis.

The protein belongs to the uracil-DNA glycosylase (UDG) superfamily. UNG family.

It localises to the cytoplasm. The catalysed reaction is Hydrolyzes single-stranded DNA or mismatched double-stranded DNA and polynucleotides, releasing free uracil.. Functionally, excises uracil residues from the DNA which can arise as a result of misincorporation of dUMP residues by DNA polymerase or due to deamination of cytosine. The chain is Uracil-DNA glycosylase from Helicobacter acinonychis (strain Sheeba).